The primary structure comprises 462 residues: UDP-N-acetylmuramoylalanine--D-glutamate ligase (462 aa).

Position 118–124 (118–124 (GTNGKST)) interacts with ATP.

The protein belongs to the MurCDEF family.

The protein localises to the cytoplasm. It carries out the reaction UDP-N-acetyl-alpha-D-muramoyl-L-alanine + D-glutamate + ATP = UDP-N-acetyl-alpha-D-muramoyl-L-alanyl-D-glutamate + ADP + phosphate + H(+). It participates in cell wall biogenesis; peptidoglycan biosynthesis. In terms of biological role, cell wall formation. Catalyzes the addition of glutamate to the nucleotide precursor UDP-N-acetylmuramoyl-L-alanine (UMA). This chain is UDP-N-acetylmuramoylalanine--D-glutamate ligase, found in Anaeromyxobacter dehalogenans (strain 2CP-C).